The chain runs to 383 residues: Acetylornithine deacetylase (383 aa).

Residue His-80 coordinates Zn(2+). The active site involves Asp-82. Residue Asp-112 participates in Zn(2+) binding. Glu-144 is an active-site residue. Zn(2+) is bound by residues Glu-145, Glu-169, and His-355.

This sequence belongs to the peptidase M20A family. ArgE subfamily. As to quaternary structure, homodimer. It depends on Zn(2+) as a cofactor. Co(2+) is required as a cofactor. Requires glutathione as cofactor.

Its subcellular location is the cytoplasm. It catalyses the reaction N(2)-acetyl-L-ornithine + H2O = L-ornithine + acetate. Its pathway is amino-acid biosynthesis; L-arginine biosynthesis; L-ornithine from N(2)-acetyl-L-ornithine (linear): step 1/1. In terms of biological role, catalyzes the hydrolysis of the amide bond of N(2)-acetylated L-amino acids. Cleaves the acetyl group from N-acetyl-L-ornithine to form L-ornithine, an intermediate in L-arginine biosynthesis pathway, and a branchpoint in the synthesis of polyamines. This chain is Acetylornithine deacetylase, found in Escherichia coli O7:K1 (strain IAI39 / ExPEC).